A 158-amino-acid chain; its full sequence is Transcription elongation factor GreA (158 aa).

Positions 53 to 73 (EQQSFVEGRIQEIEGKLSNAQ) form a coiled coil.

This sequence belongs to the GreA/GreB family.

Functionally, necessary for efficient RNA polymerase transcription elongation past template-encoded arresting sites. The arresting sites in DNA have the property of trapping a certain fraction of elongating RNA polymerases that pass through, resulting in locked ternary complexes. Cleavage of the nascent transcript by cleavage factors such as GreA or GreB allows the resumption of elongation from the new 3'terminus. GreA releases sequences of 2 to 3 nucleotides. The sequence is that of Transcription elongation factor GreA from Alkalilimnicola ehrlichii (strain ATCC BAA-1101 / DSM 17681 / MLHE-1).